The chain runs to 105 residues: MAAKIKKGDKVVILTGKDKGKKGDVVAVFPKENKALVQGVNMVKRHEKPSQTATGGIVTREAKVHLSNIAIQDPKTGAPTRVGFKTLDDGRKVRFAKASGETIDG.

Belongs to the universal ribosomal protein uL24 family. As to quaternary structure, part of the 50S ribosomal subunit.

In terms of biological role, one of two assembly initiator proteins, it binds directly to the 5'-end of the 23S rRNA, where it nucleates assembly of the 50S subunit. Its function is as follows. One of the proteins that surrounds the polypeptide exit tunnel on the outside of the subunit. In Parvibaculum lavamentivorans (strain DS-1 / DSM 13023 / NCIMB 13966), this protein is Large ribosomal subunit protein uL24.